The primary structure comprises 155 residues: Aspartate carbamoyltransferase regulatory chain (155 aa).

Residues Cys113, Cys118, Cys141, and Cys144 each coordinate Zn(2+).

Belongs to the PyrI family. As to quaternary structure, contains catalytic and regulatory chains. Requires Zn(2+) as cofactor.

Involved in allosteric regulation of aspartate carbamoyltransferase. In Methanococcus aeolicus (strain ATCC BAA-1280 / DSM 17508 / OCM 812 / Nankai-3), this protein is Aspartate carbamoyltransferase regulatory chain.